The following is a 1015-amino-acid chain: Transposase for transposon Tn3 (1015 aa).

The protein belongs to the transposase 7 family.

In terms of biological role, required for transposition of transposon Tn3. The polypeptide is Transposase for transposon Tn3 (tnpA) (Escherichia coli).